Consider the following 135-residue polypeptide: Protein NrdI (135 aa).

It belongs to the NrdI family.

Functionally, probably involved in ribonucleotide reductase function. The sequence is that of Protein NrdI from Pectobacterium atrosepticum (strain SCRI 1043 / ATCC BAA-672) (Erwinia carotovora subsp. atroseptica).